The following is a 365-amino-acid chain: Paraneoplastic antigen Ma2 homolog (365 aa).

N-acetylalanine is present on A2. Residues 336 to 365 are disordered; it reads EEEDAYFEQESREEPGEREGSGCWNNSRNN. Basic and acidic residues predominate over residues 344–355; the sequence is QESREEPGEREG.

The protein belongs to the PNMA family. Expressed in the cerebrum, cerebellum and testis.

It localises to the nucleus. The protein localises to the nucleolus. The polypeptide is Paraneoplastic antigen Ma2 homolog (Pnma2) (Mus musculus (Mouse)).